We begin with the raw amino-acid sequence, 352 residues long: Nicotinate-nucleotide--dimethylbenzimidazole phosphoribosyltransferase (352 aa).

Glu-318 (proton acceptor) is an active-site residue.

Belongs to the CobT family.

It catalyses the reaction 5,6-dimethylbenzimidazole + nicotinate beta-D-ribonucleotide = alpha-ribazole 5'-phosphate + nicotinate + H(+). The protein operates within nucleoside biosynthesis; alpha-ribazole biosynthesis; alpha-ribazole from 5,6-dimethylbenzimidazole: step 1/2. Catalyzes the synthesis of alpha-ribazole-5'-phosphate from nicotinate mononucleotide (NAMN) and 5,6-dimethylbenzimidazole (DMB). This is Nicotinate-nucleotide--dimethylbenzimidazole phosphoribosyltransferase from Dehalococcoides mccartyi (strain CBDB1).